Reading from the N-terminus, the 385-residue chain is Lipid-A-disaccharide synthase (385 aa).

The protein belongs to the LpxB family.

It catalyses the reaction a lipid X + a UDP-2-N,3-O-bis[(3R)-3-hydroxyacyl]-alpha-D-glucosamine = a lipid A disaccharide + UDP + H(+). The protein operates within bacterial outer membrane biogenesis; LPS lipid A biosynthesis. Condensation of UDP-2,3-diacylglucosamine and 2,3-diacylglucosamine-1-phosphate to form lipid A disaccharide, a precursor of lipid A, a phosphorylated glycolipid that anchors the lipopolysaccharide to the outer membrane of the cell. The chain is Lipid-A-disaccharide synthase from Pseudoalteromonas translucida (strain TAC 125).